A 217-amino-acid chain; its full sequence is Probable glutathione S-transferase (217 aa).

The GST N-terminal domain maps to 2 to 81 (AEVKLLGLRY…YIDEAFEGPS (80 aa)). Glutathione is bound by residues serine 12, lysine 39, isoleucine 53, and 65–66 (ES). Residues 86-210 (DPYDRALARF…ELLIRYRAYI (125 aa)) form the GST C-terminal domain.

Belongs to the GST superfamily. HSP26 family.

The enzyme catalyses RX + glutathione = an S-substituted glutathione + a halide anion + H(+). The chain is Probable glutathione S-transferase (PRP1) from Solanum tuberosum (Potato).